Consider the following 99-residue polypeptide: Cytochrome c2 iso-1 (99 aa).

4 residues coordinate heme c: C10, C13, H14, and M75.

Belongs to the cytochrome c family. In terms of processing, binds 1 heme c group covalently per subunit.

Its function is as follows. Cytochrome c2 is found mainly in purple, non-sulfur, photosynthetic bacteria where it functions as the electron donor to the oxidized bacteriochlorophyll in the photophosphorylation pathway. However, it may also have a role in the respiratory chain and is found in some non-photosynthetic bacteria. In Magnetospirillum fulvum (Rhodospirillum fulvum), this protein is Cytochrome c2 iso-1.